A 364-amino-acid chain; its full sequence is Probable dual-specificity RNA methyltransferase RlmN (364 aa).

Glu107 (proton acceptor) is an active-site residue. The Radical SAM core domain occupies 113 to 346 (HDYGNSVCVT…ATIRREQGSD (234 aa)). An intrachain disulfide couples Cys120 to Cys351. Residues Cys127, Cys131, and Cys134 each contribute to the [4Fe-4S] cluster site. S-adenosyl-L-methionine is bound by residues 177-178 (GE), Ser209, 232-234 (SLH), and Asn308. Catalysis depends on Cys351, which acts as the S-methylcysteine intermediate.

This sequence belongs to the radical SAM superfamily. RlmN family. It depends on [4Fe-4S] cluster as a cofactor.

It is found in the cytoplasm. It carries out the reaction adenosine(2503) in 23S rRNA + 2 reduced [2Fe-2S]-[ferredoxin] + 2 S-adenosyl-L-methionine = 2-methyladenosine(2503) in 23S rRNA + 5'-deoxyadenosine + L-methionine + 2 oxidized [2Fe-2S]-[ferredoxin] + S-adenosyl-L-homocysteine. The enzyme catalyses adenosine(37) in tRNA + 2 reduced [2Fe-2S]-[ferredoxin] + 2 S-adenosyl-L-methionine = 2-methyladenosine(37) in tRNA + 5'-deoxyadenosine + L-methionine + 2 oxidized [2Fe-2S]-[ferredoxin] + S-adenosyl-L-homocysteine. Its function is as follows. Specifically methylates position 2 of adenine 2503 in 23S rRNA and position 2 of adenine 37 in tRNAs. Confers resistance to some classes of antibiotics. The chain is Probable dual-specificity RNA methyltransferase RlmN from Staphylococcus aureus (strain MW2).